Consider the following 890-residue polypeptide: DNA mismatch repair protein MutS (890 aa).

645-652 (GPNMAGKS) is a binding site for ATP.

The protein belongs to the DNA mismatch repair MutS family.

In terms of biological role, this protein is involved in the repair of mismatches in DNA. It is possible that it carries out the mismatch recognition step. This protein has a weak ATPase activity. In Rickettsia africae (strain ESF-5), this protein is DNA mismatch repair protein MutS.